The chain runs to 613 residues: Metacaspase-1 (613 aa).

Active-site residues include His404 and Cys460.

Belongs to the peptidase C14B family. Monomer.

Its activity is regulated as follows. Activated by Ca(2+). In terms of biological role, cysteine protease that cleaves specifically after arginine or lysine residues. May play a role in apoptosis. The polypeptide is Metacaspase-1 (Plasmodium falciparum (isolate 3D7)).